We begin with the raw amino-acid sequence, 181 residues long: Vacuolar ATPase assembly protein VMA22 (181 aa).

Serine 2 bears the N-acetylalanine mark. Basic and acidic residues-rich tracts occupy residues 93–107 (AQDK…DNKL) and 114–125 (TKPEKQKTQSHK). The disordered stretch occupies residues 93–125 (AQDKQEKKEEEDNKLTQRKKGTKPEKQKTQSHK).

Functionally, required for V-ATPase activity. The polypeptide is Vacuolar ATPase assembly protein VMA22 (VMA22) (Saccharomyces cerevisiae (strain ATCC 204508 / S288c) (Baker's yeast)).